A 292-amino-acid chain; its full sequence is NAD kinase (292 aa).

Aspartate 73 (proton acceptor) is an active-site residue. NAD(+)-binding positions include 73-74, 147-148, histidine 158, arginine 175, aspartate 177, 188-193, and glutamine 247; these read DG, NE, and TAYSLS.

It belongs to the NAD kinase family. A divalent metal cation is required as a cofactor.

It is found in the cytoplasm. It carries out the reaction NAD(+) + ATP = ADP + NADP(+) + H(+). Its function is as follows. Involved in the regulation of the intracellular balance of NAD and NADP, and is a key enzyme in the biosynthesis of NADP. Catalyzes specifically the phosphorylation on 2'-hydroxyl of the adenosine moiety of NAD to yield NADP. The chain is NAD kinase from Erwinia tasmaniensis (strain DSM 17950 / CFBP 7177 / CIP 109463 / NCPPB 4357 / Et1/99).